Here is a 663-residue protein sequence, read N- to C-terminus: UvrABC system protein B (663 aa).

Residues 1–10 (MIDKRDDKPF) show a composition bias toward basic and acidic residues. Residues 1–23 (MIDKRDDKPFKLKSKYKPSGDQP) form a disordered region. Residues 31–418 (DNIEGGEKAQ…TNTIIEQIIR (388 aa)) enclose the Helicase ATP-binding domain. ATP is bound at residue 44–51 (GATGTGKT). Positions 97-120 (YYDYYQPEAYVPSSDTYIEKDSSV) match the Beta-hairpin motif. Residues 435–601 (QMDDLLGEIN…TIKKDIRGLI (167 aa)) enclose the Helicase C-terminal domain. Positions 627–662 (KEAINALQKQMQEAAELLDFELAAQMRDLILELKLM) constitute a UVR domain.

This sequence belongs to the UvrB family. In terms of assembly, forms a heterotetramer with UvrA during the search for lesions. Interacts with UvrC in an incision complex.

The protein localises to the cytoplasm. The UvrABC repair system catalyzes the recognition and processing of DNA lesions. A damage recognition complex composed of 2 UvrA and 2 UvrB subunits scans DNA for abnormalities. Upon binding of the UvrA(2)B(2) complex to a putative damaged site, the DNA wraps around one UvrB monomer. DNA wrap is dependent on ATP binding by UvrB and probably causes local melting of the DNA helix, facilitating insertion of UvrB beta-hairpin between the DNA strands. Then UvrB probes one DNA strand for the presence of a lesion. If a lesion is found the UvrA subunits dissociate and the UvrB-DNA preincision complex is formed. This complex is subsequently bound by UvrC and the second UvrB is released. If no lesion is found, the DNA wraps around the other UvrB subunit that will check the other stand for damage. This is UvrABC system protein B from Streptococcus pyogenes serotype M3 (strain ATCC BAA-595 / MGAS315).